A 307-amino-acid chain; its full sequence is Non-homologous end joining protein Ku (307 aa).

The Ku domain maps to 11-179; it reads LSFGLVSIPV…EVRSMKDLNI (169 aa). Low complexity-rich tracts occupy residues 257–267 and 290–307; these read RGGAKAKPAAA and ARAP…RARK. The tract at residues 257–307 is disordered; the sequence is RGGAKAKPAAAPRRKAPEPVAGMAEATRARKPAARAPKSPAEAPAKVRARK.

It belongs to the prokaryotic Ku family. Homodimer. Interacts with LigD.

Its function is as follows. With LigD forms a non-homologous end joining (NHEJ) DNA repair enzyme, which repairs dsDNA breaks with reduced fidelity. Binds linear dsDNA with 5'- and 3'- overhangs but not closed circular dsDNA nor ssDNA. Recruits and stimulates the ligase activity of LigD. The sequence is that of Non-homologous end joining protein Ku from Paraburkholderia phymatum (strain DSM 17167 / CIP 108236 / LMG 21445 / STM815) (Burkholderia phymatum).